Consider the following 343-residue polypeptide: Protein RecA (343 aa).

68–75 (GPESSGKT) contributes to the ATP binding site.

It belongs to the RecA family.

It is found in the cytoplasm. Can catalyze the hydrolysis of ATP in the presence of single-stranded DNA, the ATP-dependent uptake of single-stranded DNA by duplex DNA, and the ATP-dependent hybridization of homologous single-stranded DNAs. It interacts with LexA causing its activation and leading to its autocatalytic cleavage. The protein is Protein RecA of Syntrophobacter fumaroxidans (strain DSM 10017 / MPOB).